The sequence spans 360 residues: MKKYLALALIAPLLVSCSSSNKKGAEYNEAWVKDTNGFDILMGQFAHNIENIWGYNEVLLAGPKDYVKYTDQYQTRSHINFDEGTITVETIAGTDPRGRLRQAIVKTLLMGDDPNSIDLYSDVDDIQISKEPFLYGQVVDNTGASIRWEWRAARFADYLLQTRLKSRNNGLRVVYSITINLVPNHLDKRAHKYLGMVRQASRKYGVDESLILAIMQTESSFNPYAVSHADAMGLMQVVQHSAGRDVFRSQGKSGLPSRSYLFDPANNIDTGTAYLAMLNNVYLAGIDNPTSRRYAVITAYNGGAGSVLRVFSSDKVQAANIINSMAPGDVYQTLTTRHPSAESRRYLYKVNTAQKSYRRK.

A signal peptide spans 1-16; the sequence is MKKYLALALIAPLLVS. Residue cysteine 17 is the site of N-palmitoyl cysteine attachment. Cysteine 17 carries S-diacylglycerol cysteine lipidation.

This sequence belongs to the transglycosylase Slt family.

It localises to the cell outer membrane. The catalysed reaction is Exolytic cleavage of the (1-&gt;4)-beta-glycosidic linkage between N-acetylmuramic acid (MurNAc) and N-acetylglucosamine (GlcNAc) residues in peptidoglycan, from either the reducing or the non-reducing ends of the peptidoglycan chains, with concomitant formation of a 1,6-anhydrobond in the MurNAc residue.. Murein-degrading enzyme. May play a role in recycling of muropeptides during cell elongation and/or cell division. The chain is Membrane-bound lytic murein transglycosylase C from Klebsiella pneumoniae subsp. pneumoniae (strain ATCC 700721 / MGH 78578).